The following is a 31-amino-acid chain: uncharacterized protein (31 aa).

This is an uncharacterized protein from Saccharomyces cerevisiae (strain ATCC 204508 / S288c) (Baker's yeast).